The chain runs to 572 residues: 2-isopropylmalate synthase (572 aa).

Positions 31–305 (PIWMSTDLRD…DPGLDFSNIN (275 aa)) constitute a Pyruvate carboxyltransferase domain. Mg(2+)-binding residues include aspartate 40, histidine 244, histidine 246, and asparagine 280. Residues 437-572 (NATPVHYVGH…MNDATESVGV (136 aa)) are regulatory domain.

It belongs to the alpha-IPM synthase/homocitrate synthase family. LeuA type 2 subfamily. As to quaternary structure, homodimer. It depends on Mg(2+) as a cofactor.

The protein localises to the cytoplasm. It carries out the reaction 3-methyl-2-oxobutanoate + acetyl-CoA + H2O = (2S)-2-isopropylmalate + CoA + H(+). It participates in amino-acid biosynthesis; L-leucine biosynthesis; L-leucine from 3-methyl-2-oxobutanoate: step 1/4. Functionally, catalyzes the condensation of the acetyl group of acetyl-CoA with 3-methyl-2-oxobutanoate (2-ketoisovalerate) to form 3-carboxy-3-hydroxy-4-methylpentanoate (2-isopropylmalate). The sequence is that of 2-isopropylmalate synthase from Paraburkholderia xenovorans (strain LB400).